A 229-amino-acid polypeptide reads, in one-letter code: PKHD-type hydroxylase BBta_1313 (229 aa).

Residues 78-180 (HIFPPLFNRY…RIASFFWLQS (103 aa)) enclose the Fe2OG dioxygenase domain. Residues His-98, Asp-100, and His-161 each contribute to the Fe cation site. Residue Arg-171 participates in 2-oxoglutarate binding.

The cofactor is Fe(2+). Requires L-ascorbate as cofactor.

This chain is PKHD-type hydroxylase BBta_1313, found in Bradyrhizobium sp. (strain BTAi1 / ATCC BAA-1182).